The primary structure comprises 174 residues: Guided entry of tail-anchored proteins factor 1 (174 aa).

Residues 1–8 (MSAAEADR) lie on the Lumenal side of the membrane. Residues 9–29 (WAWLLVLSFVFGCNVLRILLP) form a helical membrane-spanning segment. Over 30–99 (SFSFFMSRVL…VKARTAQLAK (70 aa)) the chain is Cytoplasmic. The stretch at 39-94 (LQKDAEQESQMRAEIQGMKQELSTVNMMDEFARYARLERKINKMTDKLKTHVKART) forms a coiled coil. The interaction with GET3/TRC40 stretch occupies residues 39–97 (LQKDAEQESQMRAEIQGMKQELSTVNMMDEFARYARLERKINKMTDKLKTHVKARTAQL). A helical transmembrane segment spans residues 100–120 (IKWVISVAFYILQAALMVSLI). Residues 121–148 (WKYYSVPVAVVPSKWITPLDRLVAFPTR) lie on the Lumenal side of the membrane. A helical membrane pass occupies residues 149 to 169 (VAGGVGITCWILVCNKVVAIV). Residues 170–174 (LHPFS) lie on the Cytoplasmic side of the membrane.

This sequence belongs to the WRB/GET1 family. As to quaternary structure, component of the Golgi to ER traffic (GET) complex, which is composed of GET1/WRB, CAMLG/GET2 and GET3. Within the complex, GET1 and CAMLG form a heterotetramer which is stabilized by phosphatidylinositol binding and which binds to the GET3 homodimer. Interacts with CAMLG (via C-terminus). GET3 shows a higher affinity for CAMLG than for GET1.

It localises to the endoplasmic reticulum membrane. In terms of biological role, required for the post-translational delivery of tail-anchored (TA) proteins to the endoplasmic reticulum. Together with CAMLG/GET2, acts as a membrane receptor for soluble GET3/TRC40, which recognizes and selectively binds the transmembrane domain of TA proteins in the cytosol. Required to ensure correct topology and ER insertion of CAMLG. This Bos taurus (Bovine) protein is Guided entry of tail-anchored proteins factor 1.